We begin with the raw amino-acid sequence, 219 residues long: dTTP/UTP pyrophosphatase (219 aa).

Asp-79 acts as the Proton acceptor in catalysis.

Belongs to the Maf family. YhdE subfamily. A divalent metal cation serves as cofactor.

It is found in the cytoplasm. It carries out the reaction dTTP + H2O = dTMP + diphosphate + H(+). The enzyme catalyses UTP + H2O = UMP + diphosphate + H(+). In terms of biological role, nucleoside triphosphate pyrophosphatase that hydrolyzes dTTP and UTP. May have a dual role in cell division arrest and in preventing the incorporation of modified nucleotides into cellular nucleic acids. The protein is dTTP/UTP pyrophosphatase of Oleidesulfovibrio alaskensis (strain ATCC BAA-1058 / DSM 17464 / G20) (Desulfovibrio alaskensis).